Consider the following 335-residue polypeptide: MLNTVIVGASGYAGAELAALVQNHPQLKLFGLYVSAGSQDAHKRFSSLHPQWVGALDQPLLPLDEDGMTRILTQADLVLLATAHEVSAELAPKFLAKGLPVFDLSGAFRVKDQQFYSSFYGFTHENEQLLEQAAYGLAEWNSDAIAAAQLIAVPGCYPTASLCALKPLQQAGLIAEGWQPIINAVSGVSGAGRKAAINTSFCEVSLSPYGTFNHRHQPEISHHLGKEVLFQPHLGNYVRGILATIYVQMADGVTPTQVDQAFLKAYEGKPLVRLTGQMPSIRGVASTPYCDIAWQQQGNMLVVVSAIDNLLKGAASQAMQCINIKFGFDPATGLI.

Residue Cys-156 is part of the active site.

This sequence belongs to the NAGSA dehydrogenase family. Type 1 subfamily.

The protein localises to the cytoplasm. It catalyses the reaction N-acetyl-L-glutamate 5-semialdehyde + phosphate + NADP(+) = N-acetyl-L-glutamyl 5-phosphate + NADPH + H(+). Its pathway is amino-acid biosynthesis; L-arginine biosynthesis; N(2)-acetyl-L-ornithine from L-glutamate: step 3/4. Functionally, catalyzes the NADPH-dependent reduction of N-acetyl-5-glutamyl phosphate to yield N-acetyl-L-glutamate 5-semialdehyde. In Aeromonas salmonicida (strain A449), this protein is N-acetyl-gamma-glutamyl-phosphate reductase.